Reading from the N-terminus, the 164-residue chain is Protein SprT (164 aa).

A SprT-like domain is found at 14–156 (QQAETFFKRP…LCKRCRAILV (143 aa)). H69 serves as a coordination point for Zn(2+). E70 is an active-site residue. H73 provides a ligand contact to Zn(2+).

This sequence belongs to the SprT family. Zn(2+) is required as a cofactor.

It localises to the cytoplasm. The protein is Protein SprT of Pseudomonas putida (strain GB-1).